The primary structure comprises 138 residues: Small ribosomal subunit protein uS8c (138 aa).

This sequence belongs to the universal ribosomal protein uS8 family. As to quaternary structure, part of the 30S ribosomal subunit.

The protein localises to the plastid. Its subcellular location is the chloroplast. One of the primary rRNA binding proteins, it binds directly to 16S rRNA central domain where it helps coordinate assembly of the platform of the 30S subunit. This Chlorella vulgaris (Green alga) protein is Small ribosomal subunit protein uS8c (rps8).